Reading from the N-terminus, the 120-residue chain is MVQRLVYRSRHSYATKSNQHRIVKTPGGKLTYQTTNKRASGPKCPVTGKRIQGIPHLRPAEYKRSRLARNERTVNRAYGGVLSGVAVRERIVRAFLVEEQKIVKKVLKLQKAKEKTAPKS.

A disordered region spans residues 31–50 (TYQTTNKRASGPKCPVTGKR).

The protein belongs to the eukaryotic ribosomal protein eL34 family.

This Arabidopsis thaliana (Mouse-ear cress) protein is Large ribosomal subunit protein eL34x (RPL34C).